A 784-amino-acid polypeptide reads, in one-letter code: DNA repair and recombination protein RAD54-like (784 aa).

The interval Met-1–Ala-50 is disordered. The segment at Arg-2–Gln-9 is required for chromatin remodeling, strand pairing activities and coupling of ATPase activity. Phosphoserine is present on Ser-20. Thr-22 is modified (phosphothreonine). Residues Glu-36 to Arg-47 are compositionally biased toward basic and acidic residues. In terms of domain architecture, Helicase ATP-binding spans Glu-172 to Glu-346. Residue Asp-185–Thr-192 coordinates ATP. Residues Asp-297 to His-300 carry the DEGH box motif. A Helicase C-terminal domain is found at Leu-503–Thr-660. Over residues Val-747–Glu-756 the composition is skewed to low complexity. A disordered region spans residues Val-747–Phe-784. Acidic residues predominate over residues Asp-775 to Phe-784.

The protein belongs to the SNF2/RAD54 helicase family. In terms of assembly, interacts (via N-terminus) with spn-A/Rad51.

It is found in the nucleus. Functionally, involved in mitotic DNA repair and meiotic recombination. Functions in the recombinational DNA repair pathway. Essential for interhomolog gene conversion (GC), but may have a less important role in intersister GC than spn-A/Rad51. In the presence of DNA, spn-A/Rad51 enhances the ATPase activity of okr/Rad54. The sequence is that of DNA repair and recombination protein RAD54-like from Drosophila erecta (Fruit fly).